A 152-amino-acid chain; its full sequence is Aspartate carbamoyltransferase regulatory chain (152 aa).

4 residues coordinate Zn(2+): cysteine 108, cysteine 113, cysteine 136, and cysteine 139.

The protein belongs to the PyrI family. Contains catalytic and regulatory chains. The cofactor is Zn(2+).

Involved in allosteric regulation of aspartate carbamoyltransferase. This is Aspartate carbamoyltransferase regulatory chain from Thermococcus kodakarensis (strain ATCC BAA-918 / JCM 12380 / KOD1) (Pyrococcus kodakaraensis (strain KOD1)).